A 1154-amino-acid polypeptide reads, in one-letter code: Voltage-gated inwardly rectifying potassium channel KCNH2 (1154 aa).

At 1 to 403 (MPVRRGHVAP…RIHRWTILHY (403 aa)) the chain is on the cytoplasmic side. One can recognise a PAS domain in the interval 41–70 (VIYCNDGFCELCGYSRAEVMQRPCTCDFLH). The 53-residue stretch at 92-144 (RKVEIAFYRKDGSCFLCLVDVVPVKNEDGAVIMFILNFEVVMEKDMVGSPARD) folds into the PAC domain. The tract at residues 233–312 (ALVGSGSPPA…ASTGAMHPLR (80 aa)) is disordered. S239 carries the post-translational modification Phosphoserine. Polar residues predominate over residues 258–269 (PDGSGSSCSLAR). Residues S283, S284, S320, and S351 each carry the phosphoserine modification. The helical transmembrane segment at 404–424 (SPFKAVWDWLILLLVIYTAVF) threads the bilayer. Over 425–450 (TPYSAAFLLKETEEGSQAPDCGYACQ) the chain is Extracellular. The helical transmembrane segment at 451-471 (PLAVVDLIVDIMFIVDILINF) threads the bilayer. Over 472–495 (RTTYVNANEEVVSHPGRIAVHYFK) the chain is Cytoplasmic. The chain crosses the membrane as a helical span at residues 496-516 (GWFLIDMVAAIPFDLLIFGSG). At 517–520 (SEEL) the chain is on the extracellular side. A helical; Voltage-sensor membrane pass occupies residues 521-541 (IGLLKTARLLRLVRVARKLDR). Residues 542 to 547 (YSEYGA) are Cytoplasmic-facing. Residues 548–568 (AVLFLLMCTFALIAHWLACIW) traverse the membrane as a helical segment. Topologically, residues 569–611 (YAIGNMEQPNMDSHIGWLHNLGDQIGKPYNSSGLGGPSIKDKY) are extracellular. An intramembrane region (pore-forming) is located at residues 612 to 632 (VTALYFTFSSLTSVGFGNVSP). The Selectivity filter motif lies at 624 to 629 (SVGFGN). The Extracellular segment spans residues 633–638 (NTNSEK). Residues 639–659 (IFSICVMLIGSLMYASIFGNV) form a helical membrane-spanning segment. Residues 660–1154 (SAIIQRLYSG…LHRHGSDPGS (495 aa)) are Cytoplasmic-facing. A cNMP-binding domain region spans residues 742–842 (PFRGATKGCL…IHRDDLLEVL (101 aa)). The tract at residues 870-985 (GSPGSTELEG…DVEKSSDTCN (116 aa)) is disordered. A phosphoserine mark is found at S871 and S874. Residues 883–892 (RQRKRKLSFR) show a composition bias toward basic residues. The segment covering 916–927 (GPSGRGQQGGPW) has biased composition (gly residues). Residues 928 to 939 (GESLSSGPSSPE) are compositionally biased toward low complexity. Omega-N-methylarginine is present on R1014. Positions 1037–1064 (RGDVESRLDALQRQLNRLETRLSADMAT) form a coiled coil. The tract at residues 1125-1154 (DGPARRLSLPGQLGALTSQPLHRHGSDPGS) is disordered. A Phosphoserine modification is found at S1132.

This sequence belongs to the potassium channel family. H (Eag) (TC 1.A.1.20) subfamily. Kv11.1/KCNH2 sub-subfamily. In terms of assembly, the potassium channel is probably composed of a homo- or heterotetrameric complex of pore-forming alpha subunits that can associate with modulating beta subunits. Interacts with DNAJB12 and DNAJB14; chaperones DNAJB12 and DNAJB14 promote tetramerization. Heteromultimer with KCNH6/ERG2 and KCNH7/ERG3. Interacts with ALG10B. Forms a stable complex with KCNE1 or KCNE2, and that this heteromultimerization regulates Inward rectifier potassium channel activity. Interacts with CANX. The core-glycosylated, but not the fully glycosylated form interacts with RNF207. Interacts with NDFIP1 and NDFIP2; this interaction decreases the cell membrane expression by targeting KCNH2, through interaction with NEDD4L, for the degradation through the multivesicular bodies (MVBs)-lysosomal pathway. Phosphorylated on serine and threonine residues. Phosphorylation by PKA inhibits ion conduction.

It is found in the cell membrane. It carries out the reaction K(+)(in) = K(+)(out). Functionally, pore-forming (alpha) subunit of voltage-gated inwardly rectifying potassium channel. Characterized by unusual gating kinetics by producing relatively small outward currents during membrane depolarization and large inward currents during subsequent repolarization which reflect a rapid inactivation during depolarization and quick recovery from inactivation but slow deactivation (closing) during repolarization. Channel properties are modulated by cAMP and subunit assembly. Forms a stable complex with KCNE1 or KCNE2, and that this heteromultimerization regulates inward rectifier potassium channel activity. The polypeptide is Voltage-gated inwardly rectifying potassium channel KCNH2 (Sus scrofa (Pig)).